We begin with the raw amino-acid sequence, 210 residues long: Outer-membrane lipoprotein carrier protein (210 aa).

Positions Met-1–Ala-26 are cleaved as a signal peptide.

The protein belongs to the LolA family. In terms of assembly, monomer.

Its subcellular location is the periplasm. In terms of biological role, participates in the translocation of lipoproteins from the inner membrane to the outer membrane. Only forms a complex with a lipoprotein if the residue after the N-terminal Cys is not an aspartate (The Asp acts as a targeting signal to indicate that the lipoprotein should stay in the inner membrane). This Bordetella bronchiseptica (strain ATCC BAA-588 / NCTC 13252 / RB50) (Alcaligenes bronchisepticus) protein is Outer-membrane lipoprotein carrier protein.